Here is a 126-residue protein sequence, read N- to C-terminus: Protein ApaG (126 aa).

Residues 2-126 enclose the ApaG domain; the sequence is SFPIDSIKIK…FRLAMPGVMQ (125 aa).

This Shewanella denitrificans (strain OS217 / ATCC BAA-1090 / DSM 15013) protein is Protein ApaG.